A 156-amino-acid polypeptide reads, in one-letter code: 3-hydroxyacyl-[acyl-carrier-protein] dehydratase FabZ (156 aa).

The active site involves His57.

This sequence belongs to the thioester dehydratase family. FabZ subfamily.

The protein resides in the cytoplasm. The enzyme catalyses a (3R)-hydroxyacyl-[ACP] = a (2E)-enoyl-[ACP] + H2O. Functionally, involved in unsaturated fatty acids biosynthesis. Catalyzes the dehydration of short chain beta-hydroxyacyl-ACPs and long chain saturated and unsaturated beta-hydroxyacyl-ACPs. The protein is 3-hydroxyacyl-[acyl-carrier-protein] dehydratase FabZ of Anaeromyxobacter sp. (strain K).